A 399-amino-acid polypeptide reads, in one-letter code: uncharacterized protein (399 aa).

The next 10 membrane-spanning stretches (helical) occupy residues 6-26 (HLTF…LIIP), 27-47 (KGYN…FIPL), 60-80 (LIFS…INKD), 111-131 (ILYA…FQKF), 147-167 (MGNI…HFFI), 173-193 (STLF…LSGA), 195-215 (GGWI…KEFI), 220-240 (IITL…SPKF), 328-348 (GLVG…YFIK), and 362-382 (ILGI…SFLA).

It localises to the cell membrane. This is an uncharacterized protein from Haemophilus influenzae (strain ATCC 51907 / DSM 11121 / KW20 / Rd).